A 157-amino-acid chain; its full sequence is Small ribosomal subunit protein uS7 (157 aa).

Belongs to the universal ribosomal protein uS7 family. As to quaternary structure, part of the 30S ribosomal subunit. Contacts proteins S9 and S11.

Functionally, one of the primary rRNA binding proteins, it binds directly to 16S rRNA where it nucleates assembly of the head domain of the 30S subunit. Is located at the subunit interface close to the decoding center, probably blocks exit of the E-site tRNA. This Blochmanniella floridana protein is Small ribosomal subunit protein uS7.